We begin with the raw amino-acid sequence, 224 residues long: tRNA (guanine-N(7)-)-methyltransferase (224 aa).

4 residues coordinate S-adenosyl-L-methionine: Glu-54, Glu-79, Glu-106, and Asp-129. Residue Asp-129 is part of the active site. Lys-133 and Asp-165 together coordinate substrate.

It belongs to the class I-like SAM-binding methyltransferase superfamily. TrmB family.

The enzyme catalyses guanosine(46) in tRNA + S-adenosyl-L-methionine = N(7)-methylguanosine(46) in tRNA + S-adenosyl-L-homocysteine. It functions in the pathway tRNA modification; N(7)-methylguanine-tRNA biosynthesis. In terms of biological role, catalyzes the formation of N(7)-methylguanine at position 46 (m7G46) in tRNA. This chain is tRNA (guanine-N(7)-)-methyltransferase, found in Chlamydia abortus (strain DSM 27085 / S26/3) (Chlamydophila abortus).